A 248-amino-acid polypeptide reads, in one-letter code: 2,3-bisphosphoglycerate-dependent phosphoglycerate mutase (248 aa).

Substrate is bound by residues R8–N15, T21–G22, R60, E87–Y90, K98, R114–R115, and G183–N184. H9 functions as the Tele-phosphohistidine intermediate in the catalytic mechanism. E87 serves as the catalytic Proton donor/acceptor.

The protein belongs to the phosphoglycerate mutase family. BPG-dependent PGAM subfamily. As to quaternary structure, homodimer.

It catalyses the reaction (2R)-2-phosphoglycerate = (2R)-3-phosphoglycerate. Its pathway is carbohydrate degradation; glycolysis; pyruvate from D-glyceraldehyde 3-phosphate: step 3/5. Functionally, catalyzes the interconversion of 2-phosphoglycerate and 3-phosphoglycerate. This Ralstonia nicotianae (strain ATCC BAA-1114 / GMI1000) (Ralstonia solanacearum) protein is 2,3-bisphosphoglycerate-dependent phosphoglycerate mutase.